The chain runs to 431 residues: Serine hydroxymethyltransferase 2 (431 aa).

(6S)-5,6,7,8-tetrahydrofolate is bound by residues leucine 131 and glycine 135–leucine 137. Lysine 240 is subject to N6-(pyridoxal phosphate)lysine.

It belongs to the SHMT family. In terms of assembly, homodimer. Requires pyridoxal 5'-phosphate as cofactor.

The protein localises to the cytoplasm. It carries out the reaction (6R)-5,10-methylene-5,6,7,8-tetrahydrofolate + glycine + H2O = (6S)-5,6,7,8-tetrahydrofolate + L-serine. It participates in one-carbon metabolism; tetrahydrofolate interconversion. Its pathway is amino-acid biosynthesis; glycine biosynthesis; glycine from L-serine: step 1/1. In terms of biological role, catalyzes the reversible interconversion of serine and glycine with tetrahydrofolate (THF) serving as the one-carbon carrier. This reaction serves as the major source of one-carbon groups required for the biosynthesis of purines, thymidylate, methionine, and other important biomolecules. Also exhibits THF-independent aldolase activity toward beta-hydroxyamino acids, producing glycine and aldehydes, via a retro-aldol mechanism. The chain is Serine hydroxymethyltransferase 2 from Photobacterium profundum (strain SS9).